A 571-amino-acid polypeptide reads, in one-letter code: Glutamine--tRNA ligase (571 aa).

Residues 35 to 45 (PEPNGYLHIGH) carry the 'HIGH' region motif. Residues 36 to 38 (EPN) and 42 to 48 (HIGHAKS) contribute to the ATP site. L-glutamine is bound by residues Asp68 and Tyr213. ATP contacts are provided by residues Thr232, 262-263 (RL), and 270-272 (LSK). The 'KMSKS' region motif lies at 269–273 (ILSKR).

It belongs to the class-I aminoacyl-tRNA synthetase family. As to quaternary structure, monomer.

The protein resides in the cytoplasm. It catalyses the reaction tRNA(Gln) + L-glutamine + ATP = L-glutaminyl-tRNA(Gln) + AMP + diphosphate. The polypeptide is Glutamine--tRNA ligase (Buchnera aphidicola subsp. Acyrthosiphon pisum (strain APS) (Acyrthosiphon pisum symbiotic bacterium)).